We begin with the raw amino-acid sequence, 476 residues long: Bifunctional protein HldE (476 aa).

The interval 1–318 (MKPILPDYNS…AEAVHGSQDT (318 aa)) is ribokinase. 195-198 (NMKE) lines the ATP pocket. D264 is an active-site residue. A cytidylyltransferase region spans residues 344 to 476 (MTNGCFDILH…IINAIKGGKG (133 aa)).

The protein in the N-terminal section; belongs to the carbohydrate kinase PfkB family. This sequence in the C-terminal section; belongs to the cytidylyltransferase family. Homodimer.

The catalysed reaction is D-glycero-beta-D-manno-heptose 7-phosphate + ATP = D-glycero-beta-D-manno-heptose 1,7-bisphosphate + ADP + H(+). It carries out the reaction D-glycero-beta-D-manno-heptose 1-phosphate + ATP + H(+) = ADP-D-glycero-beta-D-manno-heptose + diphosphate. It participates in nucleotide-sugar biosynthesis; ADP-L-glycero-beta-D-manno-heptose biosynthesis; ADP-L-glycero-beta-D-manno-heptose from D-glycero-beta-D-manno-heptose 7-phosphate: step 1/4. Its pathway is nucleotide-sugar biosynthesis; ADP-L-glycero-beta-D-manno-heptose biosynthesis; ADP-L-glycero-beta-D-manno-heptose from D-glycero-beta-D-manno-heptose 7-phosphate: step 3/4. The protein operates within bacterial outer membrane biogenesis; LPS core biosynthesis. Functionally, catalyzes the phosphorylation of D-glycero-D-manno-heptose 7-phosphate at the C-1 position to selectively form D-glycero-beta-D-manno-heptose-1,7-bisphosphate. In terms of biological role, catalyzes the ADP transfer from ATP to D-glycero-beta-D-manno-heptose 1-phosphate, yielding ADP-D-glycero-beta-D-manno-heptose. This chain is Bifunctional protein HldE, found in Vibrio parahaemolyticus serotype O3:K6 (strain RIMD 2210633).